Reading from the N-terminus, the 117-residue chain is Large ribosomal subunit protein bL19 (117 aa).

This sequence belongs to the bacterial ribosomal protein bL19 family.

In terms of biological role, this protein is located at the 30S-50S ribosomal subunit interface and may play a role in the structure and function of the aminoacyl-tRNA binding site. This Shewanella denitrificans (strain OS217 / ATCC BAA-1090 / DSM 15013) protein is Large ribosomal subunit protein bL19.